The primary structure comprises 389 residues: Na(+)/H(+) antiporter NhaA (389 aa).

The next 11 helical transmembrane spans lie at isoleucine 17 to leucine 37, leucine 59 to valine 79, serine 95 to phenylalanine 115, alanine 124 to leucine 144, valine 154 to phenylalanine 174, threonine 177 to leucine 197, leucine 213 to isoleucine 233, phenylalanine 261 to leucine 281, proline 287 to phenylalanine 307, isoleucine 328 to leucine 348, and leucine 363 to valine 383.

Belongs to the NhaA Na(+)/H(+) (TC 2.A.33) antiporter family.

Its subcellular location is the cell inner membrane. It carries out the reaction Na(+)(in) + 2 H(+)(out) = Na(+)(out) + 2 H(+)(in). Functionally, na(+)/H(+) antiporter that extrudes sodium in exchange for external protons. In Shewanella sp. (strain MR-7), this protein is Na(+)/H(+) antiporter NhaA.